A 257-amino-acid chain; its full sequence is Imidazole glycerol phosphate synthase subunit HisF (257 aa).

Residues Asp12 and Asp131 contribute to the active site.

It belongs to the HisA/HisF family. In terms of assembly, heterodimer of HisH and HisF.

The protein resides in the cytoplasm. The enzyme catalyses 5-[(5-phospho-1-deoxy-D-ribulos-1-ylimino)methylamino]-1-(5-phospho-beta-D-ribosyl)imidazole-4-carboxamide + L-glutamine = D-erythro-1-(imidazol-4-yl)glycerol 3-phosphate + 5-amino-1-(5-phospho-beta-D-ribosyl)imidazole-4-carboxamide + L-glutamate + H(+). Its pathway is amino-acid biosynthesis; L-histidine biosynthesis; L-histidine from 5-phospho-alpha-D-ribose 1-diphosphate: step 5/9. In terms of biological role, IGPS catalyzes the conversion of PRFAR and glutamine to IGP, AICAR and glutamate. The HisF subunit catalyzes the cyclization activity that produces IGP and AICAR from PRFAR using the ammonia provided by the HisH subunit. The protein is Imidazole glycerol phosphate synthase subunit HisF of Burkholderia thailandensis (strain ATCC 700388 / DSM 13276 / CCUG 48851 / CIP 106301 / E264).